A 262-amino-acid polypeptide reads, in one-letter code: Cutinase 2 (262 aa).

Tyr-61 contributes to the poly(ethylene terephthalate) binding site. Ser-131 (nucleophile) is an active-site residue. Residues Met-132 and Trp-156 each coordinate poly(ethylene terephthalate). Catalysis depends on charge relay system residues Asp-177 and His-209. Cys-242 and Cys-260 form a disulfide bridge.

Belongs to the AB hydrolase superfamily.

It localises to the secreted. Its subcellular location is the periplasm. It catalyses the reaction a butanoate ester + H2O = an aliphatic alcohol + butanoate + H(+). The catalysed reaction is an acetyl ester + H2O = an aliphatic alcohol + acetate + H(+). The enzyme catalyses (ethylene terephthalate)(n) + H2O = (ethylene terephthalate)(n-1) + 4-[(2-hydroxyethoxy)carbonyl]benzoate + H(+). It carries out the reaction cutin + H2O = cutin monomers.. In terms of biological role, catalyzes the hydrolysis of cutin, a polyester that forms the structure of plant cuticle. Shows esterase activity towards p-nitrophenol-linked aliphatic esters (pNP-aliphatic esters). Capable of degrading the plastic poly(ethylene terephthalate) (PET), the most abundant polyester plastic in the world. Capable of degrading the bioplastic poly(lactic acid) (PLLA). The protein is Cutinase 2 of Thermobifida cellulosilytica.